Here is a 332-residue protein sequence, read N- to C-terminus: Apoptosis-enhancing nuclease (332 aa).

The disordered stretch occupies residues 1–102 (MVPREVPESS…VPREAPSSGP (102 aa)). Residues 20–36 (ARRRHKRRSRQHQRFMA) are compositionally biased toward basic residues. Positions 21–29 (RRRHKRRSR) match the Nucleolar localization signal motif. Positions 63–73 (QTPAGTEASGN) are enriched in polar residues. Residues 105–261 (YVAIDCEMVG…EDAMTAMELY (157 aa)) form the Exonuclease domain. The Nuclear localization signal signature appears at 160 to 183 (RQHMHKAIPFQVAQKEILKLLKGK). The disordered stretch occupies residues 272–332 (VASTAKAHPE…EGQGARSAPP (61 aa)). The segment covering 310–321 (GDTREAQDRQEG) has biased composition (basic and acidic residues).

Its subcellular location is the nucleus. It localises to the nucleolus. Exonuclease with activity against single- and double-stranded DNA and RNA. Mediates p53-induced apoptosis. When induced by p53 following DNA damage, digests double-stranded DNA to form single-stranded DNA and amplifies DNA damage signals, leading to enhancement of apoptosis. This Rattus norvegicus (Rat) protein is Apoptosis-enhancing nuclease.